Consider the following 258-residue polypeptide: UPF0246 protein YaaA (258 aa).

The protein belongs to the UPF0246 family.

This is UPF0246 protein YaaA from Escherichia coli (strain SMS-3-5 / SECEC).